Here is a 206-residue protein sequence, read N- to C-terminus: Ribosomal RNA large subunit methyltransferase E (206 aa).

Positions 60, 62, 80, 96, and 121 each coordinate S-adenosyl-L-methionine. The active-site Proton acceptor is Lys-161.

This sequence belongs to the class I-like SAM-binding methyltransferase superfamily. RNA methyltransferase RlmE family.

The protein localises to the cytoplasm. It carries out the reaction uridine(2552) in 23S rRNA + S-adenosyl-L-methionine = 2'-O-methyluridine(2552) in 23S rRNA + S-adenosyl-L-homocysteine + H(+). Specifically methylates the uridine in position 2552 of 23S rRNA at the 2'-O position of the ribose in the fully assembled 50S ribosomal subunit. The chain is Ribosomal RNA large subunit methyltransferase E from Legionella pneumophila (strain Paris).